We begin with the raw amino-acid sequence, 598 residues long: MATLCIGSAPIYQNACIHNFRLQRPRRFISKSMTKTMPDANPLDLRRRSGNYQPSSWDHSYLLSIENKYVNEKEVITRHVLKKKVKKMLEEVETKSRLEKLELIDDLQKLGVSYHFEQEINNILTNFHLENGKNIWKCDKEEDLHATALEFRLLRQHGFGVSEDIFDVIIDKIESNTFKSDNITSIITLYEASYLSTKSDTKLHKVIRPFATEQIRNFVDDESETYNIMLREMAIHALEIPYHWRMRRLETRWYIDAYEKKHDMNLFLAEFAKIDFNIVQTAHQEDVKYVSCWWKETGLGSQLHFVRDRIVENYFWTVGMIYEPQFGYIRRIVAIVAALITVIDDIYDIYGTPEELELFTAMVQNWDINRLDELPEYMKLCFLTLFNEINAMGCDVLKCKNIDVIPYFKKSWADLCKAYLVEAKWYKGGYKPSVEEYMQNAWISISAPTMLIHFYCAFSGQISVQILESLVQQQQDVVRCSATVLRLANDLATSPDELARGDVLKSVQCYMHETGVSEEEARTHVQQMISHTWDEMNYEARTAARSSSLLSRRFVETAMNLARMSQCMYQHGDGHGCPDKAKIVDRVQTLLVDPIPLD.

The transit peptide at 1 to 30 (MATLCIGSAPIYQNACIHNFRLQRPRRFIS) directs the protein to the chloroplast. Residues Arg-307, Asp-344, Asp-348, Arg-486, and Asn-489 each coordinate (2E)-geranyl diphosphate. Mg(2+) is bound by residues Asp-344 and Asp-348. The DDXXD motif signature appears at 344–348 (DDIYD). 3 residues coordinate Mg(2+): Asn-489, Thr-493, and Glu-497.

Belongs to the terpene synthase family. Tpsb subfamily. It depends on Mg(2+) as a cofactor. Mn(2+) is required as a cofactor. Expressed exclusively in mature flowers, but not in inmmature buds.

Its subcellular location is the plastid. It localises to the chloroplast. The catalysed reaction is (2E)-geranyl diphosphate = beta-myrcene + diphosphate. The protein operates within secondary metabolite biosynthesis; terpenoid biosynthesis. Functionally, involved in monoterpene (C10) biosynthesis. The major products are alpha- and beta-pinene, sabinene, beta-myrcene, (E)-beta-ocimene and limonene. In Arabidopsis thaliana (Mouse-ear cress), this protein is Beta-myrcene/(E)-beta-ocimene synthase 2, chloroplastic (TPS24).